The primary structure comprises 212 residues: Response regulator SsrB (212 aa).

The segment at 1 to 138 (MKEYKILLVD…PTLNREAILA (138 aa)) is required for prevention of DNA binding in absence of phosphorylation and for full stimulation of activity by acidic pH. One can recognise a Response regulatory domain in the interval 5-121 (KILLVDDHEI…VLLAALQTVA (117 aa)). Asp56 bears the 4-aspartylphosphate mark. In terms of domain architecture, HTH luxR-type spans 143–208 (DTTNHQLLTL…ELLNCARRMR (66 aa)). The H-T-H motif DNA-binding region spans 167 to 186 (NHGISEKLHISIKTVETHRM). Cys203 bears the S-nitrosocysteine mark.

Homodimer; disulfide-linked; dimerizes upon DNA-binding. Post-translationally, ssrB phosphorylated on Asp-56 activates the expression of virulence genes whereas the unphosphorylated form controls biofilm formation. Independently of SsrA, can be phosphorylated by small inorganic phosphate donors (such as acetyl phosphate or phosphoramidate). In terms of processing, disulfide bond formation at Cys-203 is not required for dimerization. Cys-203 may serve as a redox sensor that is nitrosylated in presence of reactive nitrogen species (RNS) generated by the host, the modification modulates its DNA-binding activity. Cys-203 is relatively resistant to oxidation by hydrogen peroxide.

It localises to the cytoplasm. Member of the two-component regulatory system SsrA/SsrB (SpiR/SsrB) that is required for intracellular proliferation and systemic dissemination within the host. When inside acidic Salmonella-containing vesicles (SCV) within host cells the SsrA sensor kinase autophosphorylates and the phosphoryl group is transferred to the response regulator SsrB; phosphorylated SsrB activates the expression of genes encoding virulence proteins, including pathogenicity island 2 (SPI2) and other horizontally acquired genes, but also ancestral genes; it can stimulate gene expression both by recruiting RNA polymerase and by antagonizing the action of the transcriptional repressor hns (H-NS). Can also act independently of sensor kinase ssrA to support the dormant carrier state by directing the transcription of factors required for biofilm formation. DNA-binding is stimulated by acidic pH conditions, and binding promotes bending of DNA both upstream and downstream of binding sites. Binds a degenerate 18-basepair palindromic sequence with a 7-4-7 internal organization, and regulates gene expression from 86 operons. When phosphorylated, activates the transcription of the ABC transporter complex dalSTUV, which helps protect the organism from oxidative killing by host neutrophils. Binds the phoP promoter to stimulate expression in acidic pH conditions. Antagonizes hns to activate the transcription of ugtL. Following invasion of host cells, binds the hilD and hilA regulatory regions to repress their transcription and consequently to repress transcription of pathogenicity island 1 (SPI1) encoding genes involved in host cell invasion. Binds the promoters of the flagellar master regulators flhD and flhC to repress their expression and consequently to suppress flagellar motility and promote evasion of the host inflammasome during infection of host cells. Activates expression of sseI/srfH, sifA, sifB, sseJ and regulates its own expression. When unphosphorylated, relieves the hns-mediated repression of master biofilm regulator csgD by binding and bending the csgD regulatory region. May act as early as in the lumen of the host small intestine, to activate the expression of virulence proteins prior to invasion of host cells. The protein is Response regulator SsrB of Salmonella typhimurium (strain LT2 / SGSC1412 / ATCC 700720).